We begin with the raw amino-acid sequence, 1463 residues long: Gag-Pol polyprotein (1463 aa).

Gly-2 is lipidated: N-myristoyl glycine; by host. The segment at 7–31 is interaction with Gp41; that stretch reads VLRGKKADELEKIRLRPGGKKKYRL. The Nuclear export signal motif lies at 16–22; that stretch reads LEKIRLR. Residues 26 to 32 carry the Nuclear localization signal motif; that stretch reads KKKYRLK. Residues 112-138 are disordered; that stretch reads TKTTEKMPSTSRPTAPPSGNGGNFPVQ. The interaction with human PPIA/CYPA and NUP153 stretch occupies residues 191-228; it reads NCVGDHQAAMQIIREIINEEAADWDAQHPIPGPLPAGQ. The dimerization/Multimerization of capsid protein p24 stretch occupies residues 279–365; that stretch reads YNPTNILDIK…GGPGQKARLM (87 aa). 2 CCHC-type zinc fingers span residues 389-406 and 410-427; these read IKCW…QCRA and QGCW…KCPE. Positions 441–508 are disordered; it reads EAPQFPCGPN…TRDTMQRDDR (68 aa). The segment covering 462 to 508 has biased composition (basic and acidic residues); it reads RPSRGPTREVHAAREKAERAEREAIQRSDRGLPAARETRDTMQRDDR. The interval 513 to 517 is dimerization of protease; that stretch reads PQFSL. The region spanning 532-601 is the Peptidase A2 domain; that stretch reads VEVLLDTGAD…TPINIFGRNI (70 aa). Asp-537 functions as the For protease activity; shared with dimeric partner in the catalytic mechanism. 2 dimerization of protease regions span residues 561 to 567 and 600 to 612; these read GIGGFIN and NILT…LNLP. The Reverse transcriptase domain occupies 655 to 845; sequence EGQLEEAPPT…PPYQWMGYEL (191 aa). Residues Asp-721, Asp-796, and Asp-797 each contribute to the Mg(2+) site. Residues 838–846 are RT 'primer grip'; the sequence is YQWMGYELW. The Tryptophan repeat motif motif lies at 1008–1024; that stretch reads WEQWWDNYWQVTWIPDW. In terms of domain architecture, RNase H type-1 spans 1044 to 1167; the sequence is ILGAETFYTD…VDHLVSQGIR (124 aa). 4 residues coordinate Mg(2+): Asp-1053, Glu-1088, Asp-1108, and Asp-1159. The segment at 1173 to 1214 adopts an Integrase-type zinc-finger fold; sequence EKIEPAQEEHEKYHSNVKELSHKFGLPKLVARQIVNTCTQCQ. Zn(2+) contacts are provided by His-1182, His-1186, Cys-1210, and Cys-1213. Residues 1223 to 1374 enclose the Integrase catalytic domain; the sequence is QVNAELGTWQ…TPAERLINMV (152 aa). Mg(2+) is bound by residues Asp-1234, Asp-1286, and Glu-1322. The integrase-type DNA-binding region spans 1393-1440; it reads FRVYFREGRDQLWKGPGELLWKGDGAVIVKVGADIKIIPRRKAKIIKD.

In terms of assembly, homotrimer; further assembles as hexamers of trimers. Interacts with gp41 (via C-terminus). Interacts with host CALM1; this interaction induces a conformational change in the Matrix protein, triggering exposure of the myristate group. Interacts with host AP3D1; this interaction allows the polyprotein trafficking to multivesicular bodies during virus assembly. Part of the pre-integration complex (PIC) which is composed of viral genome, matrix protein, Vpr and integrase. Homodimer; the homodimer further multimerizes as homohexamers or homopentamers. Interacts with human PPIA/CYPA. Interacts with human NUP153. Interacts with host PDZD8; this interaction stabilizes the capsid. Interacts with monkey TRIM5; this interaction destabilizes the capsid. As to quaternary structure, homodimer, whose active site consists of two apposed aspartic acid residues. In terms of assembly, heterodimer of p66 RT and p51 RT (RT p66/p51). Heterodimerization of RT is essential for DNA polymerase activity. The overall folding of the subdomains is similar in p66 RT and p51 RT but the spatial arrangements of the subdomains are dramatically different. Homotetramer; may further associate as a homohexadecamer. Part of the pre-integration complex (PIC) which is composed of viral genome, matrix protein, Vpr and integrase. Interacts with human SMARCB1/INI1 and human PSIP1/LEDGF isoform 1. Interacts with human KPNA3; this interaction might play a role in nuclear import of the pre-integration complex. Interacts with human NUP153; this interaction might play a role in nuclear import of the pre-integration complex. It depends on Mg(2+) as a cofactor. Post-translationally, specific enzymatic cleavages by the viral protease yield mature proteins. The protease is released by autocatalytic cleavage. The polyprotein is cleaved during and after budding, this process is termed maturation. Proteolytic cleavage of p66 RT removes the RNase H domain to yield the p51 RT subunit. Nucleocapsid protein p7 might be further cleaved after virus entry.

The protein localises to the host cell membrane. Its subcellular location is the host endosome. It localises to the host multivesicular body. It is found in the virion membrane. The protein resides in the host nucleus. The protein localises to the host cytoplasm. Its subcellular location is the virion. The enzyme catalyses Endopeptidase for which the P1 residue is preferably hydrophobic.. It carries out the reaction Endohydrolysis of RNA in RNA/DNA hybrids. Three different cleavage modes: 1. sequence-specific internal cleavage of RNA. Human immunodeficiency virus type 1 and Moloney murine leukemia virus enzymes prefer to cleave the RNA strand one nucleotide away from the RNA-DNA junction. 2. RNA 5'-end directed cleavage 13-19 nucleotides from the RNA end. 3. DNA 3'-end directed cleavage 15-20 nucleotides away from the primer terminus.. It catalyses the reaction 3'-end directed exonucleolytic cleavage of viral RNA-DNA hybrid.. The catalysed reaction is DNA(n) + a 2'-deoxyribonucleoside 5'-triphosphate = DNA(n+1) + diphosphate. Protease: The viral protease is inhibited by many synthetic protease inhibitors (PIs), such as amprenavir, atazanavir, indinavir, loprinavir, nelfinavir, ritonavir and saquinavir. Use of protease inhibitors in tritherapy regimens permit more ambitious therapeutic strategies. Reverse transcriptase/ribonuclease H: RT can be inhibited either by nucleoside RT inhibitors (NRTIs) or by non nucleoside RT inhibitors (NNRTIs). NRTIs act as chain terminators, whereas NNRTIs inhibit DNA polymerization by binding a small hydrophobic pocket near the RT active site and inducing an allosteric change in this region. Classical NRTIs are abacavir, adefovir (PMEA), didanosine (ddI), lamivudine (3TC), stavudine (d4T), tenofovir (PMPA), zalcitabine (ddC), and zidovudine (AZT). Classical NNRTIs are atevirdine (BHAP U-87201E), delavirdine, efavirenz (DMP-266), emivirine (I-EBU), and nevirapine (BI-RG-587). The tritherapies used as a basic effective treatment of AIDS associate two NRTIs and one NNRTI. Mediates, with Gag polyprotein, the essential events in virion assembly, including binding the plasma membrane, making the protein-protein interactions necessary to create spherical particles, recruiting the viral Env proteins, and packaging the genomic RNA via direct interactions with the RNA packaging sequence (Psi). Gag-Pol polyprotein may regulate its own translation, by the binding genomic RNA in the 5'-UTR. At low concentration, the polyprotein would promote translation, whereas at high concentration, the polyprotein would encapsidate genomic RNA and then shut off translation. Its function is as follows. Targets the polyprotein to the plasma membrane via a multipartite membrane-binding signal, that includes its myristoylated N-terminus. Matrix protein is part of the pre-integration complex. Implicated in the release from host cell mediated by Vpu. Binds to RNA. In terms of biological role, forms the conical core that encapsulates the genomic RNA-nucleocapsid complex in the virion. Most core are conical, with only 7% tubular. The core is constituted by capsid protein hexamer subunits. The core is disassembled soon after virion entry. Host restriction factors such as TRIM5-alpha or TRIMCyp bind retroviral capsids and cause premature capsid disassembly, leading to blocks in reverse transcription. Capsid restriction by TRIM5 is one of the factors which restricts HIV-1 to the human species. Host PIN1 apparently facilitates the virion uncoating. On the other hand, interactions with PDZD8 or CYPA stabilize the capsid. Functionally, encapsulates and protects viral dimeric unspliced genomic RNA (gRNA). Binds these RNAs through its zinc fingers. Acts as a nucleic acid chaperone which is involved in rearangement of nucleic acid secondary structure during gRNA retrotranscription. Also facilitates template switch leading to recombination. As part of the polyprotein, participates in gRNA dimerization, packaging, tRNA incorporation and virion assembly. Aspartyl protease that mediates proteolytic cleavages of Gag and Gag-Pol polyproteins during or shortly after the release of the virion from the plasma membrane. Cleavages take place as an ordered, step-wise cascade to yield mature proteins. This process is called maturation. Displays maximal activity during the budding process just prior to particle release from the cell. Also cleaves Nef and Vif, probably concomitantly with viral structural proteins on maturation of virus particles. Hydrolyzes host EIF4GI and PABP1 in order to shut off the capped cellular mRNA translation. The resulting inhibition of cellular protein synthesis serves to ensure maximal viral gene expression and to evade host immune response. Its function is as follows. Multifunctional enzyme that converts the viral RNA genome into dsDNA in the cytoplasm, shortly after virus entry into the cell. This enzyme displays a DNA polymerase activity that can copy either DNA or RNA templates, and a ribonuclease H (RNase H) activity that cleaves the RNA strand of RNA-DNA heteroduplexes in a partially processive 3' to 5' endonucleasic mode. Conversion of viral genomic RNA into dsDNA requires many steps. A tRNA(3)-Lys binds to the primer-binding site (PBS) situated at the 5'-end of the viral RNA. RT uses the 3' end of the tRNA primer to perform a short round of RNA-dependent minus-strand DNA synthesis. The reading proceeds through the U5 region and ends after the repeated (R) region which is present at both ends of viral RNA. The portion of the RNA-DNA heteroduplex is digested by the RNase H, resulting in a ssDNA product attached to the tRNA primer. This ssDNA/tRNA hybridizes with the identical R region situated at the 3' end of viral RNA. This template exchange, known as minus-strand DNA strong stop transfer, can be either intra- or intermolecular. RT uses the 3' end of this newly synthesized short ssDNA to perform the RNA-dependent minus-strand DNA synthesis of the whole template. RNase H digests the RNA template except for two polypurine tracts (PPTs) situated at the 5'-end and near the center of the genome. It is not clear if both polymerase and RNase H activities are simultaneous. RNase H probably can proceed both in a polymerase-dependent (RNA cut into small fragments by the same RT performing DNA synthesis) and a polymerase-independent mode (cleavage of remaining RNA fragments by free RTs). Secondly, RT performs DNA-directed plus-strand DNA synthesis using the PPTs that have not been removed by RNase H as primers. PPTs and tRNA primers are then removed by RNase H. The 3' and 5' ssDNA PBS regions hybridize to form a circular dsDNA intermediate. Strand displacement synthesis by RT to the PBS and PPT ends produces a blunt ended, linear dsDNA copy of the viral genome that includes long terminal repeats (LTRs) at both ends. In terms of biological role, catalyzes viral DNA integration into the host chromosome, by performing a series of DNA cutting and joining reactions. This enzyme activity takes place after virion entry into a cell and reverse transcription of the RNA genome in dsDNA. The first step in the integration process is 3' processing. This step requires a complex comprising the viral genome, matrix protein, Vpr and integrase. This complex is called the pre-integration complex (PIC). The integrase protein removes 2 nucleotides from each 3' end of the viral DNA, leaving recessed CA OH's at the 3' ends. In the second step, the PIC enters cell nucleus. This process is mediated through integrase and Vpr proteins, and allows the virus to infect a non dividing cell. This ability to enter the nucleus is specific of lentiviruses, other retroviruses cannot and rely on cell division to access cell chromosomes. In the third step, termed strand transfer, the integrase protein joins the previously processed 3' ends to the 5' ends of strands of target cellular DNA at the site of integration. The 5'-ends are produced by integrase-catalyzed staggered cuts, 5 bp apart. A Y-shaped, gapped, recombination intermediate results, with the 5'-ends of the viral DNA strands and the 3' ends of target DNA strands remaining unjoined, flanking a gap of 5 bp. The last step is viral DNA integration into host chromosome. This involves host DNA repair synthesis in which the 5 bp gaps between the unjoined strands are filled in and then ligated. Since this process occurs at both cuts flanking the HIV genome, a 5 bp duplication of host DNA is produced at the ends of HIV-1 integration. Alternatively, Integrase may catalyze the excision of viral DNA just after strand transfer, this is termed disintegration. The protein is Gag-Pol polyprotein (gag-pol) of Human immunodeficiency virus type 2 subtype A (isolate ST) (HIV-2).